A 346-amino-acid polypeptide reads, in one-letter code: Phosphoribosylformylglycinamidine cyclo-ligase (346 aa).

This sequence belongs to the AIR synthase family.

It localises to the cytoplasm. The enzyme catalyses 2-formamido-N(1)-(5-O-phospho-beta-D-ribosyl)acetamidine + ATP = 5-amino-1-(5-phospho-beta-D-ribosyl)imidazole + ADP + phosphate + H(+). It functions in the pathway purine metabolism; IMP biosynthesis via de novo pathway; 5-amino-1-(5-phospho-D-ribosyl)imidazole from N(2)-formyl-N(1)-(5-phospho-D-ribosyl)glycinamide: step 2/2. This Photorhabdus laumondii subsp. laumondii (strain DSM 15139 / CIP 105565 / TT01) (Photorhabdus luminescens subsp. laumondii) protein is Phosphoribosylformylglycinamidine cyclo-ligase.